A 222-amino-acid polypeptide reads, in one-letter code: Kinetochore protein Spc25 (222 aa).

Residues 51–86 (RHQRKVGKLQKVLMERREELDKRVSFIEELDRELEA) adopt a coiled-coil conformation.

The protein belongs to the SPC25 family. In terms of assembly, component of the Ndc80 complex, which is composed of Ndc80, Nuf2 and Spc25.

It is found in the nucleus. It localises to the chromosome. Its subcellular location is the centromere. The protein resides in the kinetochore. In terms of biological role, acts as a component of the essential kinetochore-associated Ndc80 complex, which is required for chromosome segregation and spindle checkpoint activity during meiosis and mitosis. Required for kinetochore integrity and the organization of stable microtubule binding sites in the outer plate of the kinetochore. Participates in SAC signaling that responds specifically to disruptions in spindle microtubule dynamics. The NDC80 complex synergistically enhances the affinity of the SKA1 complex for microtubules and may allow the NDC80 complex to track depolymerizing microtubules. The polypeptide is Kinetochore protein Spc25 (Drosophila melanogaster (Fruit fly)).